The sequence spans 316 residues: Methionyl-tRNA formyltransferase (316 aa).

113–116 (SLLP) serves as a coordination point for (6S)-5,6,7,8-tetrahydrofolate.

The protein belongs to the Fmt family.

The catalysed reaction is L-methionyl-tRNA(fMet) + (6R)-10-formyltetrahydrofolate = N-formyl-L-methionyl-tRNA(fMet) + (6S)-5,6,7,8-tetrahydrofolate + H(+). Its function is as follows. Attaches a formyl group to the free amino group of methionyl-tRNA(fMet). The formyl group appears to play a dual role in the initiator identity of N-formylmethionyl-tRNA by promoting its recognition by IF2 and preventing the misappropriation of this tRNA by the elongation apparatus. In Proteus mirabilis (strain HI4320), this protein is Methionyl-tRNA formyltransferase.